A 1040-amino-acid chain; its full sequence is DNA mismatch repair protein MutS (1040 aa).

Positions 1-10 (MPVKPSAQNN) are enriched in polar residues. 2 disordered regions span residues 1-22 (MPVKPSAQNNSPSKPTSKSVPV) and 130-157 (ATGTDNANNPSNAPTMGDKQKKDKSKST). Over residues 11-22 (SPSKPTSKSVPV) the composition is skewed to low complexity. Residues 130–143 (ATGTDNANNPSNAP) are compositionally biased toward polar residues. ATP is bound at residue 759-766 (GPNMGGKS).

Belongs to the DNA mismatch repair MutS family.

In terms of biological role, this protein is involved in the repair of mismatches in DNA. It is possible that it carries out the mismatch recognition step. This protein has a weak ATPase activity. The sequence is that of DNA mismatch repair protein MutS from Psychrobacter cryohalolentis (strain ATCC BAA-1226 / DSM 17306 / VKM B-2378 / K5).